We begin with the raw amino-acid sequence, 186 residues long: MAQRERNREERGREERDSEFVDKLVHINRVAKVVKGGRRFGFAALVVVGDQKGRVGFGHGKAREVPEAIRKATEAAKRDMIFVPLRSGRTLHHDVEGRHGAGKVLLRAAPAGKGIIAGGPMRAVFETLGVQDVVAKSLGSSNPYNMVRATFDALKHQMHPKDIAAQRGIKYSTLQARRHDVVGSEE.

An S5 DRBM domain is found at 20–83 (FVDKLVHINR…EAAKRDMIFV (64 aa)).

The protein belongs to the universal ribosomal protein uS5 family. Part of the 30S ribosomal subunit. Contacts proteins S4 and S8.

In terms of biological role, with S4 and S12 plays an important role in translational accuracy. Its function is as follows. Located at the back of the 30S subunit body where it stabilizes the conformation of the head with respect to the body. The protein is Small ribosomal subunit protein uS5 of Brucella abortus (strain S19).